A 183-amino-acid polypeptide reads, in one-letter code: Oligoribonuclease (183 aa).

One can recognise an Exonuclease domain in the interval 10-173; it reads LIWIDLEMTG…ADIRESIAEL (164 aa). Tyr-131 is an active-site residue.

This sequence belongs to the oligoribonuclease family.

The protein resides in the cytoplasm. 3'-to-5' exoribonuclease specific for small oligoribonucleotides. This Idiomarina loihiensis (strain ATCC BAA-735 / DSM 15497 / L2-TR) protein is Oligoribonuclease.